A 210-amino-acid polypeptide reads, in one-letter code: Proteasome subunit beta 2 (210 aa).

The propeptide at 1–12 (MSNNVEEKILHG) is removed in mature form; by autocatalysis. The active-site Nucleophile is Thr13.

The protein belongs to the peptidase T1B family. As to quaternary structure, the 20S proteasome core is composed of 14 alpha and 14 beta subunits that assemble into four stacked heptameric rings, resulting in a barrel-shaped structure. The two inner rings, each composed of seven catalytic beta subunits, are sandwiched by two outer rings, each composed of seven alpha subunits. The catalytic chamber with the active sites is on the inside of the barrel. Has a gated structure, the ends of the cylinder being occluded by the N-termini of the alpha-subunits. Is capped at one or both ends by the proteasome regulatory ATPase, PAN.

It is found in the cytoplasm. It catalyses the reaction Cleavage of peptide bonds with very broad specificity.. Its activity is regulated as follows. The formation of the proteasomal ATPase PAN-20S proteasome complex, via the docking of the C-termini of PAN into the intersubunit pockets in the alpha-rings, triggers opening of the gate for substrate entry. Interconversion between the open-gate and close-gate conformations leads to a dynamic regulation of the 20S proteasome proteolysis activity. Functionally, component of the proteasome core, a large protease complex with broad specificity involved in protein degradation. The sequence is that of Proteasome subunit beta 2 from Nitrosopumilus maritimus (strain SCM1).